We begin with the raw amino-acid sequence, 2194 residues long: Supervillin (2194 aa).

The tract at residues 1–174 is interaction with MYLK; it reads MKRKERIARR…SSYSRTELSG (174 aa). 8 disordered regions span residues 35–98, 118–335, 388–414, 450–500, 513–563, 589–667, 685–719, and 739–791; these read LEED…TQSL, EKYG…QRRH, PESI…KVLE, EDRG…TERM, AVSQ…QTSK, RASR…KVDE, KSFD…QPVT, and HPVM…DSST. Phosphoserine is present on serine 50. Residues 87-98 are compositionally biased toward polar residues; it reads PYSSGIMDTQSL. 2 stretches are compositionally biased toward basic and acidic residues: residues 139-161 and 181-192; these read SRKD…ESSR and ESKDYGLHRSDG. Phosphoserine is present on residues serine 245 and serine 262. Composition is skewed to basic and acidic residues over residues 283–294 and 308–319; these read PKHEWFLQKDSE and KVREKLVREESA. Residues 320–330 are compositionally biased toward polar residues; it reads RSSPELTSESL. Residues serine 321 and serine 322 each carry the phosphoserine modification. A compositionally biased stretch (polar residues) spans 455-467; sequence GRSQEAPSGTEDL. Residues 540–551 are compositionally biased toward low complexity; the sequence is PPQLQALKAKAP. 2 stretches are compositionally biased toward basic and acidic residues: residues 592–615 and 626–635; these read RKPE…ERGS and ENRKTSERFR. Phosphoserine is present on residues serine 652 and serine 686. The span at 704–714 shows a compositional bias: basic and acidic residues; that stretch reads QRLRRLQDRSH. 2 positions are modified to phosphoserine: serine 747 and serine 781. The segment covering 770-782 has biased composition (basic and acidic residues); the sequence is LARDQTNESKDSA. Tyrosine 829 bears the Phosphotyrosine mark. Phosphothreonine is present on threonine 831. 6 positions are modified to phosphoserine: serine 893, serine 899, serine 903, serine 947, serine 979, and serine 1031. A disordered region spans residues 1036–1077; it reads EFGEPTSEQTGAAAGKPAAPTATPVSWKPQDPSEQPQEKRYQ. Positions 1045-1059 are enriched in low complexity; that stretch reads TGAAAGKPAAPTATP. Phosphoserine is present on residues serine 1099 and serine 1205. Residue threonine 1210 is modified to Phosphothreonine. Phosphoserine occurs at positions 1214, 1302, and 1385. The segment at 1399-1667 is interaction with NEB; sequence SNVSLRSVNL…KFLDWTELKR (269 aa). Gelsolin-like repeat units follow at residues 1421-1520, 1540-1662, 1732-1842, 1861-1962, and 1995-2102; these read KKLM…LGGQ, IETN…FLDW, ISVD…FQGG, WRLY…LGRR, and ATEF…FPSW. Positions 2131–2194 constitute an HP domain; the sequence is KLCKTIYPLA…VNLKKAKGLF (64 aa).

The protein belongs to the villin/gelsolin family. In terms of assembly, associates with F-actin. Interacts with NEB. Interacts with MYH9. Interacts with MYLK. Interacts with TASOR. Interacts with TRIP6 and DYNLT1. Interacts with KIF14; at midbody during cytokinesis.

The protein localises to the cell membrane. Its subcellular location is the cytoplasm. It is found in the cytoskeleton. It localises to the cell projection. The protein resides in the invadopodium. The protein localises to the podosome. Its subcellular location is the midbody. It is found in the cleavage furrow. Its function is as follows. Forms a high-affinity link between the actin cytoskeleton and the membrane. Is among the first costameric proteins to assemble during myogenesis and it contributes to myogenic membrane structure and differentiation. Appears to be involved in myosin II assembly. May modulate myosin II regulation through MLCK during cell spreading, an initial step in cell migration. May play a role in invadopodial function. In terms of biological role, may be involved in modulation of focal adhesions. Supervillin-mediated down-regulation of focal adhesions involves binding to TRIP6. Plays a role in cytokinesis through KIF14 interaction. This is Supervillin from Bos taurus (Bovine).